The following is a 901-amino-acid chain: Pyruvate, phosphate dikinase (901 aa).

The tract at residues 1-321 is N-terminal; sequence MNIAKSIHFL…WLIEQKPVEA (321 aa). A linker 1 region spans residues 322–380; it reads KSTISLVRLLLDLYEREVVDAEYVVKSVKPGQLNEILHPVIDMTSVTGLKSSQGGIIGV. A central region spans residues 381–482; sequence PGAAVGRVYF…TINEGDFVTL (102 aa). Ser-440 bears the Phosphoserine; by PDRP1 mark. His-442 acts as the Tele-phosphohistidine intermediate in catalysis. The segment at 483–522 is linker 2; the sequence is NVPYYGESTLYMGAAQLIEPDPETSGLVSFIELAKGFVRS. Residues 523–901 are C-terminal; that stretch reads FHVRANADSP…SAKSGGRRAR (379 aa). Substrate is bound by residues Arg-550, Arg-606, Glu-750, Gly-771, Thr-772, Asn-773, and Asp-774. Residue Glu-750 coordinates Mg(2+). Residue Asp-774 participates in Mg(2+) binding. Cys-835 serves as the catalytic Proton donor. A disordered region spans residues 879–901; that stretch reads EKEGRKPAWRGRSSAKSGGRRAR.

It belongs to the PEP-utilizing enzyme family. Homodimer. The cofactor is Mg(2+). Post-translationally, phosphorylation of Ser-440 in the dark inactivates the enzyme. Dephosphorylation upon light stimulation reactivates the enzyme.

The enzyme catalyses pyruvate + phosphate + ATP = phosphoenolpyruvate + AMP + diphosphate + H(+). Activated by light-induced dephosphorylation. Inhibited by dark-induced phosphorylation. Both reactions are catalyzed by PDRP1. Catalyzes the reversible phosphorylation of pyruvate and phosphate. In Treponema pallidum (strain Nichols), this protein is Pyruvate, phosphate dikinase (ppdK).